Here is a 191-residue protein sequence, read N- to C-terminus: Transcription factor E (191 aa).

Positions 4–87 (RNKELLEIGR…YWHIETKRLP (84 aa)) constitute an HTH TFE/IIEalpha-type domain. Residues 170–191 (APPKKEKKGKKSKKRSKKSKKK) form a disordered region. Residues 174–191 (KEKKGKKSKKRSKKSKKK) show a composition bias toward basic residues.

This sequence belongs to the TFE family. As to quaternary structure, monomer. Interaction with RNA polymerase subunits RpoF and RpoE is necessary for Tfe stimulatory transcription activity. Able to interact with Tbp and RNA polymerase in the absence of DNA promoter. Interacts both with the preinitiation and elongation complexes.

In terms of biological role, transcription factor that plays a role in the activation of archaeal genes transcribed by RNA polymerase. Facilitates transcription initiation by enhancing TATA-box recognition by TATA-box-binding protein (Tbp), and transcription factor B (Tfb) and RNA polymerase recruitment. Not absolutely required for transcription in vitro, but particularly important in cases where Tbp or Tfb function is not optimal. It dynamically alters the nucleic acid-binding properties of RNA polymerases by stabilizing the initiation complex and destabilizing elongation complexes. Seems to translocate with the RNA polymerase following initiation and acts by binding to the non template strand of the transcription bubble in elongation complexes. This chain is Transcription factor E, found in Pyrococcus horikoshii (strain ATCC 700860 / DSM 12428 / JCM 9974 / NBRC 100139 / OT-3).